A 303-amino-acid chain; its full sequence is N-acetyl-D-glucosamine kinase (303 aa).

ATP contacts are provided by residues 4–11 and 133–140; these read GFDIGGTK and GVGGGLIF. The Zn(2+) site is built by histidine 157, cysteine 177, cysteine 179, and cysteine 184.

This sequence belongs to the ROK (NagC/XylR) family. NagK subfamily.

It catalyses the reaction N-acetyl-D-glucosamine + ATP = N-acetyl-D-glucosamine 6-phosphate + ADP + H(+). Its pathway is cell wall biogenesis; peptidoglycan recycling. Its function is as follows. Catalyzes the phosphorylation of N-acetyl-D-glucosamine (GlcNAc) derived from cell-wall degradation, yielding GlcNAc-6-P. The sequence is that of N-acetyl-D-glucosamine kinase from Escherichia coli O139:H28 (strain E24377A / ETEC).